Reading from the N-terminus, the 162-residue chain is MQPLVGIIMGSTSDWETMKHACDILDELNVPYEKKVVSAHRTPDFMFEYAETARERGIKVIIAGAGGAAHLPGMTAAKTTLPVIGVPVQSKALNGMDSLLSIVQMPGGVPVATTSIGKAGAVNAGLLAAQILSAFDEDLARKLDERRENTKQTVLESSDQLV.

S11, D14, and R41 together coordinate substrate.

Belongs to the AIR carboxylase family. Class I subfamily.

The enzyme catalyses 5-carboxyamino-1-(5-phospho-D-ribosyl)imidazole + H(+) = 5-amino-1-(5-phospho-D-ribosyl)imidazole-4-carboxylate. It functions in the pathway purine metabolism; IMP biosynthesis via de novo pathway; 5-amino-1-(5-phospho-D-ribosyl)imidazole-4-carboxylate from 5-amino-1-(5-phospho-D-ribosyl)imidazole (N5-CAIR route): step 2/2. Functionally, catalyzes the conversion of N5-carboxyaminoimidazole ribonucleotide (N5-CAIR) to 4-carboxy-5-aminoimidazole ribonucleotide (CAIR). This Bacillus subtilis (strain 168) protein is N5-carboxyaminoimidazole ribonucleotide mutase.